We begin with the raw amino-acid sequence, 277 residues long: MGIKFTKMHGLGNDFIVLDGVNQSIQLTVEQIQKLANRHTGIGFDQCLLIESSQTEGIDFNYRIFNADGQEVGQCGNGARCIALFARYYGLTAKNKLTVATKTTLMDLIINEDNSVSVNMGVPRLAPGEIPLLADRQSPEYSLELNNGNTVNLHAISVGNPHAVLLVENIDTAPVNSLGQQISFHPQFPEQVNVGFMQIVNHEKINLRVYERGCGETIACGSGAVAAAAIARLFYNLSDKITVHLPGGDLCIQWPCPTAPIILTGPAAFVYEGTLLS.

The substrate site is built by asparagine 13, glutamine 46, and asparagine 66. Cysteine 75 serves as the catalytic Proton donor. Substrate contacts are provided by residues 76–77, asparagine 160, asparagine 193, and 211–212; these read GN and ER. Cysteine 220 acts as the Proton acceptor in catalysis. 221 to 222 lines the substrate pocket; the sequence is GS.

It belongs to the diaminopimelate epimerase family. In terms of assembly, homodimer.

It is found in the cytoplasm. It carries out the reaction (2S,6S)-2,6-diaminopimelate = meso-2,6-diaminopimelate. It participates in amino-acid biosynthesis; L-lysine biosynthesis via DAP pathway; DL-2,6-diaminopimelate from LL-2,6-diaminopimelate: step 1/1. Functionally, catalyzes the stereoinversion of LL-2,6-diaminopimelate (L,L-DAP) to meso-diaminopimelate (meso-DAP), a precursor of L-lysine and an essential component of the bacterial peptidoglycan. This Legionella pneumophila (strain Corby) protein is Diaminopimelate epimerase.